A 78-amino-acid polypeptide reads, in one-letter code: Large ribosomal subunit protein bL28 (78 aa).

Residues 1–25 (MARVCQVTGKRPMSGHHVSHANNKT) are disordered. Residues 13 to 25 (MSGHHVSHANNKT) show a composition bias toward basic residues.

It belongs to the bacterial ribosomal protein bL28 family.

This chain is Large ribosomal subunit protein bL28, found in Nitrosomonas eutropha (strain DSM 101675 / C91 / Nm57).